We begin with the raw amino-acid sequence, 487 residues long: Cobyric acid synthase (487 aa).

Residues 249–435 (GIDIAIVRLP…IHGIFDEGDF (187 aa)) enclose the GATase cobBQ-type domain. Cys-330 (nucleophile) is an active-site residue. The active site involves His-427.

The protein belongs to the CobB/CobQ family. CobQ subfamily.

It participates in cofactor biosynthesis; adenosylcobalamin biosynthesis. Catalyzes amidations at positions B, D, E, and G on adenosylcobyrinic A,C-diamide. NH(2) groups are provided by glutamine, and one molecule of ATP is hydrogenolyzed for each amidation. The sequence is that of Cobyric acid synthase from Clostridium perfringens (strain ATCC 13124 / DSM 756 / JCM 1290 / NCIMB 6125 / NCTC 8237 / Type A).